Here is a 270-residue protein sequence, read N- to C-terminus: MPELPEVEVSRLGISPHLIGQHIEQIIVRHKQLRWWVPDDVHLAEGHKVNDVRRRAKYLFIDTDAGSIILHLGMSGKLRIVNSETPVIKHDHIDIVLTNGVCLRFNDARRFGACLWQRVGDPEIGMIAALGPEPLTSDFDGQRLYDLSRTKNVPVKNFIMDNKVVVGVGNIYANESLFIAGIDPRKAAKKVSKKSYLALGDIIKQVLAKAIEQGGTTLKDFTQADGNPGYFAQHLRVYGRKGQACEVCESEIQSVTLGQRNTFFCEQCQK.

Pro-2 (schiff-base intermediate with DNA) is an active-site residue. Glu-3 functions as the Proton donor in the catalytic mechanism. The Proton donor; for beta-elimination activity role is filled by Lys-57. The DNA site is built by His-90, Arg-109, and Lys-151. The FPG-type zinc-finger motif lies at 236 to 270 (RVYGRKGQACEVCESEIQSVTLGQRNTFFCEQCQK). The active-site Proton donor; for delta-elimination activity is Arg-260.

The protein belongs to the FPG family. Monomer. Requires Zn(2+) as cofactor.

It carries out the reaction Hydrolysis of DNA containing ring-opened 7-methylguanine residues, releasing 2,6-diamino-4-hydroxy-5-(N-methyl)formamidopyrimidine.. The enzyme catalyses 2'-deoxyribonucleotide-(2'-deoxyribose 5'-phosphate)-2'-deoxyribonucleotide-DNA = a 3'-end 2'-deoxyribonucleotide-(2,3-dehydro-2,3-deoxyribose 5'-phosphate)-DNA + a 5'-end 5'-phospho-2'-deoxyribonucleoside-DNA + H(+). Functionally, involved in base excision repair of DNA damaged by oxidation or by mutagenic agents. Acts as a DNA glycosylase that recognizes and removes damaged bases. Has a preference for oxidized purines, such as 7,8-dihydro-8-oxoguanine (8-oxoG). Has AP (apurinic/apyrimidinic) lyase activity and introduces nicks in the DNA strand. Cleaves the DNA backbone by beta-delta elimination to generate a single-strand break at the site of the removed base with both 3'- and 5'-phosphates. In Pseudoalteromonas atlantica (strain T6c / ATCC BAA-1087), this protein is Formamidopyrimidine-DNA glycosylase.